A 244-amino-acid chain; its full sequence is 7-cyano-7-deazaguanine synthase (244 aa).

19–29 (FSGGQDSTTCL) contacts ATP. Residues cysteine 207, cysteine 222, cysteine 225, and cysteine 228 each contribute to the Zn(2+) site.

The protein belongs to the QueC family. Requires Zn(2+) as cofactor.

The catalysed reaction is 7-carboxy-7-deazaguanine + NH4(+) + ATP = 7-cyano-7-deazaguanine + ADP + phosphate + H2O + H(+). The protein operates within purine metabolism; 7-cyano-7-deazaguanine biosynthesis. Catalyzes the ATP-dependent conversion of 7-carboxy-7-deazaguanine (CDG) to 7-cyano-7-deazaguanine (preQ(0)). The chain is 7-cyano-7-deazaguanine synthase from Bordetella avium (strain 197N).